Reading from the N-terminus, the 315-residue chain is DNA-directed RNA polymerase subunit alpha (315 aa).

Residues 1–228 (MIGMEKPKIE…EHLELFISLT (228 aa)) form an alpha N-terminal domain (alpha-NTD) region. Residues 245–315 (RNKLMEMTIE…FGLSLRQPDD (71 aa)) form an alpha C-terminal domain (alpha-CTD) region.

The protein belongs to the RNA polymerase alpha chain family. Homodimer. The RNAP catalytic core consists of 2 alpha, 1 beta, 1 beta' and 1 omega subunit. When a sigma factor is associated with the core the holoenzyme is formed, which can initiate transcription.

The enzyme catalyses RNA(n) + a ribonucleoside 5'-triphosphate = RNA(n+1) + diphosphate. Its function is as follows. DNA-dependent RNA polymerase catalyzes the transcription of DNA into RNA using the four ribonucleoside triphosphates as substrates. The sequence is that of DNA-directed RNA polymerase subunit alpha from Symbiobacterium thermophilum (strain DSM 24528 / JCM 14929 / IAM 14863 / T).